The sequence spans 609 residues: Mitochondrial nucleoid-associated protein 1 (609 aa).

Residues 1 to 554 (MSDNPPRMEV…CNTTIRKSGF (554 aa)) are Extracellular-facing. Disordered regions lie at residues 133–163 (QEET…GESR) and 406–425 (SPEG…QASH). Residues 146–161 (TSPKRELAEDLPKSGE) show a composition bias toward basic and acidic residues. The helical transmembrane segment at 555–571 (GGITMLSTGYFVLCCSW) threads the bilayer. The Cytoplasmic portion of the chain corresponds to 572–609 (SFRRLKKLCRPLPWKSTVPPSVGVAKTTGDCRSKTCLD).

It localises to the mitochondrion inner membrane. The protein resides in the mitochondrion matrix. It is found in the mitochondrion nucleoid. In terms of biological role, critical regulator of mitochondrial DNA (mtDNA) abundance. Binds dsDNA throughout the mitochondrial genome without sequence specificity and controls mtDNA copy number by promoting its replication. Also plays important roles in mitochondrial metabolism and cell proliferation. The chain is Mitochondrial nucleoid-associated protein 1 from Pongo abelii (Sumatran orangutan).